The following is an 89-amino-acid chain: MALSVEEKAQIVNEYKQAEGDTGSPEVQVALLTANINKLQGHFKANGKDHHSRRGLIRMVNQRRKLLDYLKGKDTTRYSALIGRLGLRR.

The protein belongs to the universal ribosomal protein uS15 family. As to quaternary structure, part of the 30S ribosomal subunit. Forms a bridge to the 50S subunit in the 70S ribosome, contacting the 23S rRNA.

In terms of biological role, one of the primary rRNA binding proteins, it binds directly to 16S rRNA where it helps nucleate assembly of the platform of the 30S subunit by binding and bridging several RNA helices of the 16S rRNA. Forms an intersubunit bridge (bridge B4) with the 23S rRNA of the 50S subunit in the ribosome. In Ectopseudomonas mendocina (strain ymp) (Pseudomonas mendocina), this protein is Small ribosomal subunit protein uS15.